Here is a 612-residue protein sequence, read N- to C-terminus: Protein lin-61 (612 aa).

4 MBT repeats span residues 143-249, 263-380, 381-501, and 508-607; these read YLWE…MDKI, NDMV…GYQL, NAKK…LVPP, and FRWD…LQPP.

As to quaternary structure, interacts preferentially with histone H3 that is dimethylated or trimethylated at 'Lys-9'.

Its subcellular location is the nucleus. The protein resides in the chromosome. Synthetic multivulva class B (synMuvB) protein required to repress the induction of vulval development by Ras signaling. Unlike other synMuv proteins it does not associate with the multiprotein DRM complex and the NuRD-like complex. Interaction with methylated histone H3 is essential for vulva development. It has a role in maintaining genome stability. The sequence is that of Protein lin-61 (lin-61) from Caenorhabditis elegans.